We begin with the raw amino-acid sequence, 423 residues long: Glutamate-1-semialdehyde 2,1-aminomutase (423 aa).

At Lys-266 the chain carries N6-(pyridoxal phosphate)lysine.

The protein belongs to the class-III pyridoxal-phosphate-dependent aminotransferase family. HemL subfamily. Homodimer. It depends on pyridoxal 5'-phosphate as a cofactor.

Its subcellular location is the cytoplasm. The enzyme catalyses (S)-4-amino-5-oxopentanoate = 5-aminolevulinate. It functions in the pathway porphyrin-containing compound metabolism; protoporphyrin-IX biosynthesis; 5-aminolevulinate from L-glutamyl-tRNA(Glu): step 2/2. The polypeptide is Glutamate-1-semialdehyde 2,1-aminomutase (Desulfovibrio desulfuricans (strain ATCC 27774 / DSM 6949 / MB)).